An 82-amino-acid polypeptide reads, in one-letter code: Leucinostatins biosynthesis cluster protein M (82 aa).

A disordered region spans residues 34 to 82 (ARNETHDPSGPRAPVSSMRLGPRSRPYHHGTARLRGSPNCSRDSSSAAT). Residues 71 to 82 (PNCSRDSSSAAT) are compositionally biased toward polar residues.

In terms of biological role, part of the gene cluster that mediates the biosynthesis of the lipopeptide antibiotics leucinostatins that show extensive biological activities, including antimalarial, antiviral, antibacterial, antifungal, and antitumor activities, as well as phytotoxic. The function of lcsM within the leucinostatins biosynthesis has not been identified yet. This is Leucinostatins biosynthesis cluster protein M from Purpureocillium lilacinum (Paecilomyces lilacinus).